The chain runs to 240 residues: 2,3-bisphosphoglycerate-dependent phosphoglycerate mutase (240 aa).

Residues 5–12 (RHGESVWN), 18–19 (TG), Arg-57, 84–87 (ERHY), Lys-95, 111–112 (RR), and 180–181 (GN) contribute to the substrate site. His-6 (tele-phosphohistidine intermediate) is an active-site residue. The active-site Proton donor/acceptor is the Glu-84.

This sequence belongs to the phosphoglycerate mutase family. BPG-dependent PGAM subfamily. Homodimer.

The catalysed reaction is (2R)-2-phosphoglycerate = (2R)-3-phosphoglycerate. It functions in the pathway carbohydrate degradation; glycolysis; pyruvate from D-glyceraldehyde 3-phosphate: step 3/5. Functionally, catalyzes the interconversion of 2-phosphoglycerate and 3-phosphoglycerate. This chain is 2,3-bisphosphoglycerate-dependent phosphoglycerate mutase, found in Nitrosococcus oceani (strain ATCC 19707 / BCRC 17464 / JCM 30415 / NCIMB 11848 / C-107).